Reading from the N-terminus, the 700-residue chain is MSQYKRTLVTTALPYANGPVHLGHLAGVYLPADIYVRFKRLKGEDVIHIGGSDEHGVPITLTADKEGVSPQVVVDRYHNRNSEAFAKCGISFDHYGRTSSPVHHETAQEFFLDIEKKGIFTKKVEKQFYDEESRHFLSDRYVTGTCPVCGNPDANGDQCEKCGTYLSANELINPKSKLTGKTPILKETLHWYFPLGRFQKKLEDFIEGHAKTWRQNVINYSRTWLRQGLGDRAITRDLPWGVKVPLEGEEAKDKVLYVWFDAVLGYISSTKEWAAKQGQPDLWKTYWQSPETRLIHFIGKDNVVFHALMFPAILMAKNENADAQYVLVDNVPASEFMNFEGKKFSKSRNYAVYLHEFLEKFPADTLRYSLAINYPESRDTDFSWKDFQNRTNGELADTLGNFVKRAVDFTNSKFQGEVPAECTIEDWNALGEGWHGGFKKYEEALENFHIREACFTAMDFARFANRYLTESEPWKVIKTEPEKAAKIMAMALNLCETLATVFAPILPETSAKIFDMLGVSEAAQAKVGENLFEKVKAPQLAKGHKLSGKSEILFRKIEDADIQPELDKIAAMLAALEQKEAEKATENFEPIKPTITFDEFEKIDLRVAKVLECERVPKTDKLLRLKVQLGTETRQVLAGLAKYYTPEALLGKNVVMVANLAPRKMRGMESQGMVLAVEDAAGCLQALSPEGDSIVGKPVK.

The 'HIGH' region signature appears at 14 to 24 (PYANGPVHLGH). Positions 146, 149, 159, and 162 each coordinate Zn(2+). The 'KMSKS' region signature appears at 343–347 (KFSKS). K346 provides a ligand contact to ATP. Positions 599 to 700 (EFEKIDLRVA…GDSIVGKPVK (102 aa)) constitute a tRNA-binding domain.

This sequence belongs to the class-I aminoacyl-tRNA synthetase family. MetG type 1 subfamily. As to quaternary structure, homodimer. Zn(2+) is required as a cofactor.

It is found in the cytoplasm. It carries out the reaction tRNA(Met) + L-methionine + ATP = L-methionyl-tRNA(Met) + AMP + diphosphate. Functionally, is required not only for elongation of protein synthesis but also for the initiation of all mRNA translation through initiator tRNA(fMet) aminoacylation. The chain is Methionine--tRNA ligase from Chloroherpeton thalassium (strain ATCC 35110 / GB-78).